Here is a 165-residue protein sequence, read N- to C-terminus: MPLLDSFKVDHTKMPAPAVRLAKTMQTPKGDTISVFDLRFTRPNCELLSEKGIHTMEHLIAGFMREHLNNTRVEIIDISPMGCRTGFYMSVVGAPNEYNVKEAWESSMRDVLRICDEKDIPELNIYQCGTAKMHSLKEAQDIAQVVLDKGVSVMNTQELLLKDFA.

Residues H54, H58, and C128 each contribute to the Fe cation site.

This sequence belongs to the LuxS family. In terms of assembly, homodimer. It depends on Fe cation as a cofactor.

The catalysed reaction is S-(5-deoxy-D-ribos-5-yl)-L-homocysteine = (S)-4,5-dihydroxypentane-2,3-dione + L-homocysteine. In terms of biological role, involved in the synthesis of autoinducer 2 (AI-2) which is secreted by bacteria and is used to communicate both the cell density and the metabolic potential of the environment. The regulation of gene expression in response to changes in cell density is called quorum sensing. Catalyzes the transformation of S-ribosylhomocysteine (RHC) to homocysteine (HC) and 4,5-dihydroxy-2,3-pentadione (DPD). This Helicobacter hepaticus (strain ATCC 51449 / 3B1) protein is S-ribosylhomocysteine lyase.